A 90-amino-acid polypeptide reads, in one-letter code: DNA/RNA-binding protein Alba (90 aa).

At Lys11 the chain carries N6-acetyllysine.

The protein belongs to the histone-like Alba family. Acetylated. Acetylation at Lys-11 decreases DNA-binding affinity.

Its subcellular location is the cytoplasm. It is found in the chromosome. In terms of biological role, binds double-stranded DNA tightly but without sequence specificity. Involved in DNA compaction. The sequence is that of DNA/RNA-binding protein Alba from Picrophilus torridus (strain ATCC 700027 / DSM 9790 / JCM 10055 / NBRC 100828 / KAW 2/3).